The primary structure comprises 1142 residues: Coiled-coil domain-containing protein 40 (1142 aa).

Disordered regions lie at residues 1-197 (MAEP…QVLP) and 251-274 (PSTE…AEDE). 2 stretches are compositionally biased toward basic and acidic residues: residues 11 to 27 (SHPE…EGNN) and 35 to 55 (PEKD…HPEE). A compositionally biased stretch (acidic residues) spans 63-96 (AIEEGEVETEGEAAVEGEEEAVSYGDAESEEEYY). The residue at position 252 (Ser252) is a Phosphoserine. Positions 265 to 274 (EGSDEEAEDE) are enriched in acidic residues. 5 coiled-coil regions span residues 293–319 (AALK…ATKQ), 349–470 (HDRH…QAED), 526–627 (QAKS…LRRK), 684–950 (TSSR…LGQL), and 1005–1054 (VRKA…LTRL).

The protein belongs to the CCDC40 family.

The protein resides in the cytoplasm. The protein localises to the cell projection. Its subcellular location is the cilium. Its function is as follows. Required for assembly of dynein regulatory complex (DRC) and inner dynein arm (IDA) complexes, which are responsible for ciliary beat regulation, thereby playing a central role in motility in cilia and flagella. Probably acts together with CCDC39 to form a molecular ruler that determines the 96 nanometer (nm) repeat length and arrangements of components in cilia and flagella. Not required for outer dynein arm complexes assembly. Required for axonemal recruitment of CCDC39. The protein is Coiled-coil domain-containing protein 40 of Homo sapiens (Human).